The primary structure comprises 234 residues: MSDITAAQTTLQQAQHIVFMTGAGVSTPSGIPDYRSKNGLYTEHHNAEYYLSHAFLAEHPLEFYQYLQSNLYYPDAQPNVIHQKMAALTQQGRASVITQNIDNLYGVAKTAQLVEFHGNLYQVYCTKCGQHVDWHEYLKSPYHQTDHGYLRPNVVLYDEGIASANIERAVQYLQQADLVVICGTSFRVYPFAGLIDYRNPKAQVLAINAEPLQLPFAFTMVQQDAVDFFEGVQV.

The Deacetylase sirtuin-type domain occupies 1-234 (MSDITAAQTT…AVDFFEGVQV (234 aa)). Residues alanine 23, threonine 27, arginine 35, glutamine 99, isoleucine 101, aspartate 102, histidine 117, threonine 184, serine 185, asparagine 208, and valine 226 each contribute to the NAD(+) site. The nicotinamide site is built by isoleucine 101 and aspartate 102. The active-site Proton acceptor is the histidine 117.

The protein belongs to the sirtuin family. Class U subfamily.

The protein localises to the cytoplasm. It catalyses the reaction N(6)-acetyl-L-lysyl-[protein] + NAD(+) + H2O = 2''-O-acetyl-ADP-D-ribose + nicotinamide + L-lysyl-[protein]. NAD-dependent protein deacetylase which modulates the activities of several enzymes which are inactive in their acetylated form. The polypeptide is NAD-dependent protein deacetylase (Lactiplantibacillus plantarum (strain ATCC BAA-793 / NCIMB 8826 / WCFS1) (Lactobacillus plantarum)).